The chain runs to 1555 residues: Phospholipid-transporting ATPase DNF1 (1555 aa).

The tract at residues methionine 1–arginine 85 is disordered. At methionine 1–asparagine 134 the chain is on the cytoplasmic side. Positions tryptophan 22 to leucine 37 are enriched in basic residues. Low complexity predominate over residues glycine 72–serine 82. A helical membrane pass occupies residues isoleucine 135 to valine 155. Position 156 (asparagine 156) is a topological domain, extracellular. The chain crosses the membrane as a helical span at residues proline 157–isoleucine 177. Residues glutamate 178 to asparagine 491 are Cytoplasmic-facing. Residues threonine 257–histidine 288 form a disordered region. Residues valine 492–isoleucine 512 form a helical membrane-spanning segment. The Extracellular portion of the chain corresponds to alanine 513–glycine 537. A helical membrane pass occupies residues phenylalanine 538–isoleucine 558. Residues serine 559–methionine 1123 are Cytoplasmic-facing. The active-site 4-aspartylphosphate intermediate is the aspartate 606. ATP is bound by residues aspartate 606, lysine 607, threonine 608, glutamate 740, phenylalanine 781, serine 783, lysine 786, lysine 804, arginine 839, threonine 840, threonine 919, glycine 920, aspartate 921, arginine 1031, and lysine 1037. A Mg(2+)-binding site is contributed by aspartate 606. A Mg(2+)-binding site is contributed by threonine 608. Residue aspartate 1057 coordinates Mg(2+). ATP contacts are provided by asparagine 1060 and aspartate 1061. Aspartate 1061 contacts Mg(2+). The helical transmembrane segment at isoleucine 1124–phenylalanine 1144 threads the bilayer. The Extracellular portion of the chain corresponds to glutamate 1145–tyrosine 1146. The helical transmembrane segment at threonine 1147–leucine 1167 threads the bilayer. Residues aspartate 1168–tyrosine 1200 lie on the Cytoplasmic side of the membrane. Residues methionine 1201 to leucine 1221 form a helical membrane-spanning segment. Residues threonine 1222–arginine 1237 are Extracellular-facing. Residues leucine 1238–threonine 1258 traverse the membrane as a helical segment. Over tyrosine 1259–aspartate 1262 the chain is Cytoplasmic. A helical transmembrane segment spans residues tryptophan 1263–tyrosine 1283. At threonine 1284–glutamate 1302 the chain is on the extracellular side. The helical transmembrane segment at leucine 1303–valine 1323 threads the bilayer. An a 1,2-diacyl-sn-glycero-3-phospho-L-serine-binding site is contributed by arginine 1320. The Cytoplasmic portion of the chain corresponds to lysine 1324 to methionine 1555. Disordered regions lie at residues valine 1364–arginine 1456 and glutamate 1489–methionine 1555. Residues alanine 1406 to glutamine 1432 are compositionally biased toward polar residues. Basic and acidic residues-rich tracts occupy residues proline 1436–arginine 1456 and lysine 1540–methionine 1555.

It belongs to the cation transport ATPase (P-type) (TC 3.A.3) family. Type IV subfamily. As to quaternary structure, component of a flippase complex consisting of DNF1 and CDC50. Interacts with CDC50; the interaction is direct. Requires Mg(2+) as cofactor.

Its subcellular location is the cell membrane. It is found in the endosome membrane. The protein resides in the golgi apparatus. The protein localises to the trans-Golgi network membrane. It catalyses the reaction ATP + H2O + phospholipidSide 1 = ADP + phosphate + phospholipidSide 2.. The enzyme catalyses a 1,2-diacyl-sn-glycero-3-phosphoethanolamine(out) + ATP + H2O = a 1,2-diacyl-sn-glycero-3-phosphoethanolamine(in) + ADP + phosphate + H(+). The catalysed reaction is a 1,2-diacyl-sn-glycero-3-phosphocholine(out) + ATP + H2O = a 1,2-diacyl-sn-glycero-3-phosphocholine(in) + ADP + phosphate + H(+). It carries out the reaction a beta-D-glucosyl-(1&lt;-&gt;1')-N-acylsphing-4-enine(out) + ATP + H2O = a beta-D-glucosyl-(1&lt;-&gt;1')-N-acylsphing-4-enine(in) + ADP + phosphate + H(+). It catalyses the reaction a 1,2-diacyl-sn-glycero-3-phospho-L-serine(out) + ATP + H2O = a 1,2-diacyl-sn-glycero-3-phospho-L-serine(in) + ADP + phosphate + H(+). In terms of biological role, catalytic component of a P4-ATPase flippase complex which catalyzes the hydrolysis of ATP coupled to the transport of phosphatidylcholine and phosphatidylserine from the lumenal to the cytosolic leaflet of membranes and ensures the maintenance of asymmetric distribution of phospholipids. May also transport glucosylceramide and phosphatidylethanolamine. The chain is Phospholipid-transporting ATPase DNF1 from Chaetomium thermophilum (strain DSM 1495 / CBS 144.50 / IMI 039719) (Thermochaetoides thermophila).